Consider the following 567-residue polypeptide: Malate synthase, glyoxysomal (567 aa).

Residue Arg182 is the Proton acceptor of the active site. Asp468 functions as the Proton donor in the catalytic mechanism. Residues 565–567 (SKL) carry the Microbody targeting signal motif.

This sequence belongs to the malate synthase family.

It is found in the glyoxysome. It carries out the reaction glyoxylate + acetyl-CoA + H2O = (S)-malate + CoA + H(+). The protein operates within carbohydrate metabolism; glyoxylate cycle; (S)-malate from isocitrate: step 2/2. The protein is Malate synthase, glyoxysomal of Gossypium hirsutum (Upland cotton).